The following is a 94-amino-acid chain: Small ribosomal subunit protein uS19 (94 aa).

Belongs to the universal ribosomal protein uS19 family.

Functionally, protein S19 forms a complex with S13 that binds strongly to the 16S ribosomal RNA. The polypeptide is Small ribosomal subunit protein uS19 (Elusimicrobium minutum (strain Pei191)).